The chain runs to 78 residues: Large ribosomal subunit protein bL28 (78 aa).

It belongs to the bacterial ribosomal protein bL28 family.

The polypeptide is Large ribosomal subunit protein bL28 (Prochlorococcus marinus (strain SARG / CCMP1375 / SS120)).